A 279-amino-acid chain; its full sequence is uncharacterized protein (279 aa).

The next 3 membrane-spanning stretches (helical) occupy residues 1 to 21 (MGFI…LCGI), 38 to 58 (FACH…SVVA), and 131 to 151 (SLRY…VFID).

The protein belongs to the 1-acyl-sn-glycerol-3-phosphate acyltransferase family.

Its subcellular location is the endoplasmic reticulum membrane. This is an uncharacterized protein from Schizosaccharomyces pombe (strain 972 / ATCC 24843) (Fission yeast).